A 255-amino-acid polypeptide reads, in one-letter code: uncharacterized protein (255 aa).

Residues Asn-16 and Asn-58 are each glycosylated (N-linked (GlcNAc...) asparagine; by host). The next 2 helical transmembrane spans lie at 72–92 (LIYSNIKWLIVGITIIPTIYY) and 104–124 (LWYIGTPLVFMNLFNTLSHIC).

The protein localises to the membrane. This is an uncharacterized protein from Acanthamoeba polyphaga (Amoeba).